The chain runs to 165 residues: Probable chemoreceptor glutamine deamidase CheD (165 aa).

Belongs to the CheD family.

It catalyses the reaction L-glutaminyl-[protein] + H2O = L-glutamyl-[protein] + NH4(+). Its function is as follows. Probably deamidates glutamine residues to glutamate on methyl-accepting chemotaxis receptors (MCPs), playing an important role in chemotaxis. This chain is Probable chemoreceptor glutamine deamidase CheD, found in Geobacillus kaustophilus (strain HTA426).